The sequence spans 310 residues: tRNA-cytidine(32) 2-sulfurtransferase (310 aa).

A PP-loop motif motif is present at residues 47–52 (SGGKDS). [4Fe-4S] cluster-binding residues include cysteine 122, cysteine 125, and cysteine 213.

Belongs to the TtcA family. Homodimer. The cofactor is Mg(2+). It depends on [4Fe-4S] cluster as a cofactor.

It is found in the cytoplasm. It catalyses the reaction cytidine(32) in tRNA + S-sulfanyl-L-cysteinyl-[cysteine desulfurase] + AH2 + ATP = 2-thiocytidine(32) in tRNA + L-cysteinyl-[cysteine desulfurase] + A + AMP + diphosphate + H(+). Its pathway is tRNA modification. Catalyzes the ATP-dependent 2-thiolation of cytidine in position 32 of tRNA, to form 2-thiocytidine (s(2)C32). The sulfur atoms are provided by the cysteine/cysteine desulfurase (IscS) system. In Serratia proteamaculans (strain 568), this protein is tRNA-cytidine(32) 2-sulfurtransferase.